The chain runs to 190 residues: NADH-quinone oxidoreductase subunit B (190 aa).

Cys67, Cys68, Cys132, and Cys162 together coordinate [4Fe-4S] cluster.

It belongs to the complex I 20 kDa subunit family. As to quaternary structure, NDH-1 is composed of 14 different subunits. Subunits NuoB, C, D, E, F, and G constitute the peripheral sector of the complex. [4Fe-4S] cluster is required as a cofactor.

The protein localises to the cell inner membrane. It carries out the reaction a quinone + NADH + 5 H(+)(in) = a quinol + NAD(+) + 4 H(+)(out). Functionally, NDH-1 shuttles electrons from NADH, via FMN and iron-sulfur (Fe-S) centers, to quinones in the respiratory chain. The immediate electron acceptor for the enzyme in this species is believed to be ubiquinone. Couples the redox reaction to proton translocation (for every two electrons transferred, four hydrogen ions are translocated across the cytoplasmic membrane), and thus conserves the redox energy in a proton gradient. The sequence is that of NADH-quinone oxidoreductase subunit B from Anaplasma marginale (strain Florida).